Reading from the N-terminus, the 350-residue chain is Vancomycin C-type resistance protein VanC2 (350 aa).

Catalysis depends on residues Glu-14 and Ser-187. Residues 141-343 (HQAAAAIGVQ…YQELLQKLLV (203 aa)) form the ATP-grasp domain. 171–226 (IQTHGFPVFFKPNEAGSSKGITKVTCVEEIASALKEAFTYCSAVLLQKNIAGVEIG) provides a ligand contact to ATP. Residues Asp-297, Glu-310, and Asn-312 each contribute to the Mg(2+) site. Residues Asp-297, Glu-310, and Asn-312 each coordinate Mn(2+). Residue Ser-321 is part of the active site.

This sequence belongs to the D-alanine--D-alanine ligase family. As to quaternary structure, homodimer. The cofactor is Mg(2+). Requires Mn(2+) as cofactor.

Its subcellular location is the cell membrane. It catalyses the reaction D-serine + D-alanine + ATP = D-alanyl-D-serine + ADP + phosphate + H(+). The protein operates within cell wall biogenesis; peptidoglycan biosynthesis. Its activity is regulated as follows. Inhibited by D-cycloserine. Its function is as follows. Required for low-level resistance to the glycopeptide antibiotic vancomycin. D-alanine--D-alanine ligase of altered specificity, which catalyzes synthesis of D-Ala-D-Ser; produces a peptidoglycan which does not terminate in D-alanine but in D-serine, thus probably reducing affinity for vancomycin. Only insignificant catalytic synthesis of D-Ala-D-Ala in vitro. This is Vancomycin C-type resistance protein VanC2 from Enterococcus casseliflavus (Enterococcus flavescens).